The primary structure comprises 83 residues: NAD(P)H-quinone oxidoreductase subunit L (83 aa).

The next 2 membrane-spanning stretches (helical) occupy residues 15 to 35 (LMVLAAYVLLGGLYLIVVPLL) and 53 to 73 (LSAYGMVFLFFPGLILFAPFL).

Belongs to the complex I NdhL subunit family. NDH-1 can be composed of about 15 different subunits; different subcomplexes with different compositions have been identified which probably have different functions.

It is found in the cellular thylakoid membrane. The catalysed reaction is a plastoquinone + NADH + (n+1) H(+)(in) = a plastoquinol + NAD(+) + n H(+)(out). The enzyme catalyses a plastoquinone + NADPH + (n+1) H(+)(in) = a plastoquinol + NADP(+) + n H(+)(out). Its function is as follows. NDH-1 shuttles electrons from an unknown electron donor, via FMN and iron-sulfur (Fe-S) centers, to quinones in the respiratory and/or the photosynthetic chain. The immediate electron acceptor for the enzyme in this species is believed to be plastoquinone. Couples the redox reaction to proton translocation, and thus conserves the redox energy in a proton gradient. Cyanobacterial NDH-1 also plays a role in inorganic carbon-concentration. In Prochlorococcus marinus (strain MIT 9303), this protein is NAD(P)H-quinone oxidoreductase subunit L.